Consider the following 354-residue polypeptide: S-adenosylmethionine:tRNA ribosyltransferase-isomerase (354 aa).

The protein belongs to the QueA family. In terms of assembly, monomer.

It localises to the cytoplasm. The enzyme catalyses 7-aminomethyl-7-carbaguanosine(34) in tRNA + S-adenosyl-L-methionine = epoxyqueuosine(34) in tRNA + adenine + L-methionine + 2 H(+). It functions in the pathway tRNA modification; tRNA-queuosine biosynthesis. In terms of biological role, transfers and isomerizes the ribose moiety from AdoMet to the 7-aminomethyl group of 7-deazaguanine (preQ1-tRNA) to give epoxyqueuosine (oQ-tRNA). This chain is S-adenosylmethionine:tRNA ribosyltransferase-isomerase, found in Salmonella gallinarum (strain 287/91 / NCTC 13346).